Here is a 328-residue protein sequence, read N- to C-terminus: 3,4-dihydroxyphenylacetaldehyde synthase 2 (328 aa).

Asn111 is an active-site residue. An N6-(pyridoxal phosphate)lysine modification is found at Lys222.

The protein belongs to the group II decarboxylase family. It depends on pyridoxal 5'-phosphate as a cofactor.

It carries out the reaction L-dopa + O2 + H2O + H(+) = 3,4-dihydroxyphenylacetaldehyde + H2O2 + NH4(+) + CO2. Functionally, catalyzes the decarboxylation-oxidative deamination of L-3,4-dihydroxyphenylalanine (L-DOPA) to 3,4-dihydroxylphenylacetaldehyde (DHPAA). Involved in cuticle development. Probably responsible for the protein cross-linking during the development of flexible cuticles. The protein is 3,4-dihydroxyphenylacetaldehyde synthase 2 (amd) of Drosophila simulans (Fruit fly).